The sequence spans 608 residues: Fatty acid amide hydrolase (608 aa).

Residues lysine 206 and serine 282 each act as charge relay system in the active site. Substrate is bound at residue 303–306 (GGGS). Serine 306 serves as the catalytic Acyl-ester intermediate.

It belongs to the amidase family. Forms homodimers.

It is found in the endoplasmic reticulum membrane. The protein resides in the cell membrane. It catalyses the reaction N-(9Z,12Z-octadecadienoyl)-ethanolamine + H2O = ethanolamine + (9Z,12Z)-octadecadienoate. It carries out the reaction N-hexadecanoylethanolamine + H2O = ethanolamine + hexadecanoate. The enzyme catalyses N-dodecanoylethanolamine + H2O = dodecanoate + ethanolamine. Its activity is regulated as follows. Inhibited by methyl arachidonyl fluorophosphonate (MAFP). Catalyzes the hydrolysis of bioactive endogenous fatty acid amides to their corresponding acids. The hydrolysis of endogenous amidated lipids terminates their participation as lipid mediators in various signaling systems. Converts a wide range of N-acylethanolamines (NAEs) to their corresponding free fatty acids and ethanolamine. The chain is Fatty acid amide hydrolase from Oryza sativa subsp. japonica (Rice).